Here is a 215-residue protein sequence, read N- to C-terminus: MTLKVDVKTPAGKTDGSVELPAELFDVEPNIALMHQVVTAQLAAKRQGTHSTKTRGEVSGGGKKPYRQKGSGRARQGSTRAPQFTGGGTVHGPKPRDYSQRTPKKMIAAALRGALSDRARNDRIHAVTELVEGQTPSTKSAKTFLGTLTENKKVLVVIGRTDEVGAKSVRNLPGVHVISPDQLNTYDVLNADDVVFSVEALNAYISANSKEGASV.

A disordered region spans residues 43–100 (AAKRQGTHSTKTRGEVSGGGKKPYRQKGSGRARQGSTRAPQFTGGGTVHGPKPRDYSQ).

This sequence belongs to the universal ribosomal protein uL4 family. In terms of assembly, part of the 50S ribosomal subunit.

Its function is as follows. One of the primary rRNA binding proteins, this protein initially binds near the 5'-end of the 23S rRNA. It is important during the early stages of 50S assembly. It makes multiple contacts with different domains of the 23S rRNA in the assembled 50S subunit and ribosome. Functionally, forms part of the polypeptide exit tunnel. The polypeptide is Large ribosomal subunit protein uL4 (Mycolicibacterium smegmatis (Mycobacterium smegmatis)).